A 149-amino-acid chain; its full sequence is UPF0208 membrane protein PBPRA2797 (149 aa).

Transmembrane regions (helical) follow at residues 41–60 and 65–87; these read FATR…QMAF and ALPQ…LWWL.

This sequence belongs to the UPF0208 family.

It is found in the cell inner membrane. This chain is UPF0208 membrane protein PBPRA2797, found in Photobacterium profundum (strain SS9).